A 201-amino-acid chain; its full sequence is Translation initiation factor IF-3 (201 aa).

This sequence belongs to the IF-3 family. As to quaternary structure, monomer.

It is found in the cytoplasm. Functionally, IF-3 binds to the 30S ribosomal subunit and shifts the equilibrium between 70S ribosomes and their 50S and 30S subunits in favor of the free subunits, thus enhancing the availability of 30S subunits on which protein synthesis initiation begins. The protein is Translation initiation factor IF-3 of Mycoplasma pneumoniae (strain ATCC 29342 / M129 / Subtype 1) (Mycoplasmoides pneumoniae).